The sequence spans 115 residues: DNA-binding protein NP_4416A (115 aa).

A compositionally biased stretch (acidic residues) spans 1–11 (MSGEPTDEDLE). The interval 1 to 46 (MSGEPTDEDLEELRKKKMEQLKEQGGEGQSEAAEAQRQQAEAQKKA) is disordered. Over residues 12-25 (ELRKKKMEQLKEQG) the composition is skewed to basic and acidic residues. A compositionally biased stretch (low complexity) spans 29–41 (QSEAAEAQRQQAE).

Belongs to the PDCD5 family.

In Natronomonas pharaonis (strain ATCC 35678 / DSM 2160 / CIP 103997 / JCM 8858 / NBRC 14720 / NCIMB 2260 / Gabara) (Halobacterium pharaonis), this protein is DNA-binding protein NP_4416A.